The primary structure comprises 148 residues: Cuticle protein 8 (148 aa).

A run of 5 repeats spans residues 16-19 (AAPA), Ala22, 28-31 (AAPV), 37-40 (AAPA), and 44-47 (AAPV). The Chitin-binding type R&amp;R domain occupies 58 to 128 (YPKYEFNYGV…RTPGTHPVAV (71 aa)).

Its function is as follows. Component of the cuticle of migratory locust which contains more than 100 different structural proteins. This chain is Cuticle protein 8, found in Locusta migratoria (Migratory locust).